The following is a 359-amino-acid chain: uncharacterized protein (359 aa).

3 disordered regions span residues 90–117 (QESP…PSRK), 132–161 (IKKE…GMTS), and 235–359 (TSME…THRR). Over residues 151–161 (TPGSCSSGMTS) the composition is skewed to polar residues. Residues 245–259 (KPPTVKSPPTVKLPP) show a composition bias toward low complexity. Residues 286-299 (EENKEVPKEAEHKP) show a composition bias toward basic and acidic residues.

This is an uncharacterized protein from Homo sapiens (Human).